The following is a 428-amino-acid chain: Glutamate-1-semialdehyde 2,1-aminomutase (428 aa).

Lysine 266 carries the post-translational modification N6-(pyridoxal phosphate)lysine.

The protein belongs to the class-III pyridoxal-phosphate-dependent aminotransferase family. HemL subfamily. In terms of assembly, homodimer. Pyridoxal 5'-phosphate serves as cofactor.

The protein localises to the cytoplasm. It catalyses the reaction (S)-4-amino-5-oxopentanoate = 5-aminolevulinate. It functions in the pathway porphyrin-containing compound metabolism; protoporphyrin-IX biosynthesis; 5-aminolevulinate from L-glutamyl-tRNA(Glu): step 2/2. This Herminiimonas arsenicoxydans protein is Glutamate-1-semialdehyde 2,1-aminomutase.